The following is a 116-amino-acid chain: Ig heavy chain V region 3-6 (116 aa).

Residues 1–18 form the signal peptide; sequence MKVLSLLYLLTAIPGILS. A framework-1 region spans residues 19–48; sequence DVQLQESGPGLVKPSQSLSLTCSVTGYSIT. Cysteine 40 and cysteine 114 are joined by a disulfide. Positions 49–53 are complementarity-determining-1; that stretch reads SGYYW. A framework-2 region spans residues 54–67; it reads NWIRQFPGNKLEWM. The complementarity-determining-2 stretch occupies residues 68–84; it reads GYISYDGSNNYNPSLKN. The segment at 85–116 is framework-3; the sequence is RISITRDTSKNQFFLKLNSVTTEDTATYYCAR.

This is Ig heavy chain V region 3-6 (Ighv3-6) from Mus musculus (Mouse).